The chain runs to 301 residues: Probable alpha-L-glutamate ligase 1 (301 aa).

Positions 104–287 constitute an ATP-grasp domain; that stretch reads LQLLSRKGIG…VTEPIVEYIE (184 aa). ATP is bound by residues Lys141, 178–179, Asp187, and 211–213; these read EY and RSN. Mg(2+) is bound by residues Asp248, Glu260, and Asn262. Positions 248, 260, and 262 each coordinate Mn(2+).

This sequence belongs to the RimK family. Mg(2+) serves as cofactor. Mn(2+) is required as a cofactor.

The polypeptide is Probable alpha-L-glutamate ligase 1 (Shewanella baltica (strain OS155 / ATCC BAA-1091)).